A 137-amino-acid polypeptide reads, in one-letter code: Large ribosomal subunit protein eL32 (137 aa).

A disordered region spans residues 95–137 (PSAAEIATPVSSRKRIASSPARQADRCSRSRRSKFRPRRLRAS). Over residues 123–137 (RSRRSKFRPRRLRAS) the composition is skewed to basic residues.

Belongs to the eukaryotic ribosomal protein eL32 family.

The polypeptide is Large ribosomal subunit protein eL32 (rpl32) (Trichoderma harzianum (Hypocrea lixii)).